The primary structure comprises 1828 residues: Proteasome activator complex subunit 4 (1828 aa).

HEAT repeat units lie at residues 462 to 506, 985 to 1024, 1164 to 1202, 1339 to 1377, 1621 to 1659, and 1665 to 1703; these read PEGP…LVDC, NFCC…NHGG, YVLP…QLKR, DAFL…GSKH, PVQV…YNLF, and EESV…CNFL. The interval 1635–1723 is bromodomain-like (BRDL); sequence ARSSSWHARY…EALCKTRLPK (89 aa).

The protein belongs to the BLM10 family. As to quaternary structure, homodimer. Interacts with the 20S and 26S proteasomes.

It is found in the cytoplasm. It localises to the cytosol. Its subcellular location is the nucleus. The protein resides in the nucleus speckle. Its function is as follows. Associated component of the proteasome that specifically recognizes acetylated histones and promotes ATP- and ubiquitin-independent degradation of core histones during DNA damage response. Recognizes and binds acetylated histones via its bromodomain-like (BRDL) region and activates the proteasome by opening the gated channel for substrate entry. Binds to the core proteasome via its C-terminus, which occupies the same binding sites as the proteasomal ATPases, opening the closed structure of the proteasome via an active gating mechanism. involved in DNA damage response in somatic cells: binds to acetylated histones and promotes degradation of histones. This Xenopus laevis (African clawed frog) protein is Proteasome activator complex subunit 4 (psme4).